A 299-amino-acid polypeptide reads, in one-letter code: Nucleotide-binding protein SAV_6292 (299 aa).

Residue 23-30 coordinates ATP; it reads GMSGAGRS. 74-77 is a binding site for GTP; sequence DVRG.

This sequence belongs to the RapZ-like family.

Its function is as follows. Displays ATPase and GTPase activities. The chain is Nucleotide-binding protein SAV_6292 from Streptomyces avermitilis (strain ATCC 31267 / DSM 46492 / JCM 5070 / NBRC 14893 / NCIMB 12804 / NRRL 8165 / MA-4680).